The chain runs to 500 residues: Adenylosuccinate synthetase, chloroplastic (500 aa).

Residues Gly-87–Lys-93 and Gly-115–Thr-117 contribute to the GTP site. Asp-88 serves as the catalytic Proton acceptor. The Mg(2+) site is built by Asp-88 and Gly-115. IMP is bound by residues Asp-88–Lys-91, Asn-113–His-116, Thr-205, Arg-219, Gln-299, Thr-314, and Arg-378. His-116 serves as the catalytic Proton donor. Thr-374–Arg-380 serves as a coordination point for substrate. Residues Arg-380, Lys-406–Asp-408, and Gly-489–Gly-491 each bind GTP.

It belongs to the adenylosuccinate synthetase family. As to quaternary structure, homodimer. Mg(2+) is required as a cofactor.

It is found in the plastid. Its subcellular location is the chloroplast. It catalyses the reaction IMP + L-aspartate + GTP = N(6)-(1,2-dicarboxyethyl)-AMP + GDP + phosphate + 2 H(+). Its pathway is purine metabolism; AMP biosynthesis via de novo pathway; AMP from IMP: step 1/2. Functionally, plays an important role in the de novo pathway and in the salvage pathway of purine nucleotide biosynthesis. Catalyzes the first committed step in the biosynthesis of AMP from IMP. The polypeptide is Adenylosuccinate synthetase, chloroplastic (Solanum bulbocastanum (Wild potato)).